We begin with the raw amino-acid sequence, 396 residues long: Period circadian protein (396 aa).

4 disordered regions span residues 27–120, 167–188, 253–275, and 333–362; these read VTAP…APPV, SGPGPGHGHGIKRGGSHSWEGE, GGNGNVGSGNGNNNQPSTNQYTQ, and SPSSTNTNPNRPHKHAHVHNSSEKPSTSQA. Over residues 93-114 the composition is skewed to gly residues; that stretch reads GTSGTGNSGDGGGGGGANGTGS. Residues 253–262 are compositionally biased toward gly residues; that stretch reads GGNGNVGSGN. Positions 333–342 are enriched in low complexity; that stretch reads SPSSTNTNPN.

As to quaternary structure, forms a heterodimer with timeless (TIM); the complex then translocates into the nucleus. In terms of processing, phosphorylated with a circadian rhythmicity, probably by the double-time protein (dbt). Phosphorylation could be implicated in the stability of per monomer and in the formation of heterodimer per-tim.

The protein resides in the nucleus. It localises to the cytoplasm. It is found in the perinuclear region. Essential for biological clock functions. Determines the period length of circadian and ultradian rhythms; an increase in PER dosage leads to shortened circadian rhythms and a decrease leads to lengthened circadian rhythms. Essential for the circadian rhythmicity of locomotor activity, eclosion behavior, and for the rhythmic component of the male courtship song that originates in the thoracic nervous system. The biological cycle depends on the rhythmic formation and nuclear localization of the TIM-PER complex. Light induces the degradation of TIM, which promotes elimination of PER. Nuclear activity of the heterodimer coordinatively regulates PER and TIM transcription through a negative feedback loop. Behaves as a negative element in circadian transcriptional loop. Does not appear to bind DNA, suggesting indirect transcriptional inhibition. In Drosophila paulistorum (Fruit fly), this protein is Period circadian protein (per).